Here is a 955-residue protein sequence, read N- to C-terminus: Probable autotransporter YcgV (955 aa).

Residues 616-659 (ASGTVPEPTPNPEPTPAPAQPPIVNPDPTPEPAPTPKPTTTADA) are disordered. Over residues 622-652 (EPTPNPEPTPAPAQPPIVNPDPTPEPAPTPK) the composition is skewed to pro residues. The 269-residue stretch at 687–955 (NQSKDGNIWL…QVNGGYRFSF (269 aa)) folds into the Autotransporter domain.

Functionally, upon overexpression shows increased adherence to polyvinyl chloride (PVC) plates, increased mature biofilm formation. The chain is Probable autotransporter YcgV (ycgV) from Escherichia coli (strain K12).